A 189-amino-acid chain; its full sequence is Calcyphosin (189 aa).

EF-hand domains lie at 21-56 (SGIQGVARFFRRLDQDGSRSLDVRELQRGLAELGLV), 57-92 (LDTAEMEGVCRRWDRDGSGTLDLEEFLRALRPPMSQ), 93-128 (AREAVVTAAFAKLDRSGDGVVTVDDLRGVYSGRTHP), and 136-172 (TEEQVLRHFLDNFDSSEKDGQVTLAEFQDYYSGVSAS). Residues D34, D36, S38, S40, E45, D70, D72, S74, T76, E81, D106, S108, D110, and D117 each coordinate Ca(2+). S40 carries the post-translational modification Phosphoserine; by PKA.

Monomer. Does not form oligomers in the presence of calcium.

The protein resides in the cytoplasm. Calcium-binding protein. May play a role in cellular signaling events (Potential). In Bos taurus (Bovine), this protein is Calcyphosin (CAPS).